Here is a 329-residue protein sequence, read N- to C-terminus: Phosphate acyltransferase (329 aa).

The protein belongs to the PlsX family. Homodimer. Probably interacts with PlsY.

It is found in the cytoplasm. It catalyses the reaction a fatty acyl-[ACP] + phosphate = an acyl phosphate + holo-[ACP]. The protein operates within lipid metabolism; phospholipid metabolism. Catalyzes the reversible formation of acyl-phosphate (acyl-PO(4)) from acyl-[acyl-carrier-protein] (acyl-ACP). This enzyme utilizes acyl-ACP as fatty acyl donor, but not acyl-CoA. This is Phosphate acyltransferase from Campylobacter lari (strain RM2100 / D67 / ATCC BAA-1060).